Consider the following 449-residue polypeptide: Hyaluronidase (449 aa).

The N-terminal stretch at 1 to 23 is a signal peptide; sequence MYHLWIKCLAAWIFLKRFNGVHV. 2 cysteine pairs are disulfide-bonded: C47–C340 and C211–C227. N-linked (GlcNAc...) asparagine glycans are attached at residues N67, N103, and N111. Residue E135 is the Proton donor of the active site. N153 carries N-linked (GlcNAc...) asparagine glycosylation. A glycan (N-linked (GlcNAc...) asparagine) is linked at N357. 3 disulfide bridges follow: C365–C376, C370–C427, and C429–C438. N-linked (GlcNAc...) asparagine glycosylation occurs at N401. An EGF-like domain is found at 427–438; that stretch reads CQCYQGWKGLYC.

Belongs to the glycosyl hydrolase 56 family. As to quaternary structure, monomer. As to expression, expressed by the venom gland.

The protein localises to the secreted. It catalyses the reaction Random hydrolysis of (1-&gt;4)-linkages between N-acetyl-beta-D-glucosamine and D-glucuronate residues in hyaluronate.. In terms of biological role, snake venom endo-hyaluronidase that degrades hyaluronan to smaller oligosaccharide fragments. In venom, it is not toxic by itself, but increases the diffusion of other venom proteins by degrading the extracellular matrix. In addition, it displays antiedematogenic activity. This chain is Hyaluronidase, found in Crotalus adamanteus (Eastern diamondback rattlesnake).